We begin with the raw amino-acid sequence, 651 residues long: Acetyl-coenzyme A synthetase (651 aa).

CoA-binding positions include 189-192 (RGGK), Thr-311, and Asn-335. ATP is bound by residues 387–389 (GEP), 411–416 (DTWWQT), Asp-500, and Arg-515. Residue Ser-523 coordinates CoA. Residue Arg-526 participates in ATP binding. Residues Val-537, His-539, and Val-542 each contribute to the Mg(2+) site. Residue Arg-584 participates in CoA binding. Lys-609 carries the post-translational modification N6-acetyllysine.

This sequence belongs to the ATP-dependent AMP-binding enzyme family. The cofactor is Mg(2+). In terms of processing, acetylated. Deacetylation by the SIR2-homolog deacetylase activates the enzyme.

It catalyses the reaction acetate + ATP + CoA = acetyl-CoA + AMP + diphosphate. Catalyzes the conversion of acetate into acetyl-CoA (AcCoA), an essential intermediate at the junction of anabolic and catabolic pathways. AcsA undergoes a two-step reaction. In the first half reaction, AcsA combines acetate with ATP to form acetyl-adenylate (AcAMP) intermediate. In the second half reaction, it can then transfer the acetyl group from AcAMP to the sulfhydryl group of CoA, forming the product AcCoA. This Rhizobium etli (strain ATCC 51251 / DSM 11541 / JCM 21823 / NBRC 15573 / CFN 42) protein is Acetyl-coenzyme A synthetase.